A 397-amino-acid chain; its full sequence is Phosphoglycerate kinase (397 aa).

Substrate is bound by residues 23-25, R38, 61-64, R119, and R152; these read DLN and HLGR. ATP contacts are provided by residues K202, E324, and 354 to 357; that span reads GGDT.

Belongs to the phosphoglycerate kinase family. As to quaternary structure, monomer.

It localises to the cytoplasm. The enzyme catalyses (2R)-3-phosphoglycerate + ATP = (2R)-3-phospho-glyceroyl phosphate + ADP. It participates in carbohydrate degradation; glycolysis; pyruvate from D-glyceraldehyde 3-phosphate: step 2/5. In Xanthobacter flavus, this protein is Phosphoglycerate kinase (pgk).